The following is a 79-amino-acid chain: Small ribosomal subunit protein bS16 (79 aa).

It belongs to the bacterial ribosomal protein bS16 family.

This chain is Small ribosomal subunit protein bS16, found in Hahella chejuensis (strain KCTC 2396).